Reading from the N-terminus, the 117-residue chain is Iron-sulfur cluster insertion protein ErpA (117 aa).

Positions 45, 109, and 111 each coordinate iron-sulfur cluster.

This sequence belongs to the HesB/IscA family. In terms of assembly, homodimer. Requires iron-sulfur cluster as cofactor.

Its function is as follows. Required for insertion of 4Fe-4S clusters for at least IspG. The protein is Iron-sulfur cluster insertion protein ErpA of Chromohalobacter salexigens (strain ATCC BAA-138 / DSM 3043 / CIP 106854 / NCIMB 13768 / 1H11).